Here is a 405-residue protein sequence, read N- to C-terminus: Adenosylhomocysteinase (405 aa).

Substrate-binding residues include D113 and E138. T139 to T141 contributes to the NAD(+) binding site. K168 and D172 together coordinate substrate. NAD(+) contacts are provided by residues N173, G202 to G207, E225, N260, A281 to H283, and N327.

Belongs to the adenosylhomocysteinase family. NAD(+) serves as cofactor.

The protein resides in the cytoplasm. The catalysed reaction is S-adenosyl-L-homocysteine + H2O = L-homocysteine + adenosine. It participates in amino-acid biosynthesis; L-homocysteine biosynthesis; L-homocysteine from S-adenosyl-L-homocysteine: step 1/1. Its function is as follows. May play a key role in the regulation of the intracellular concentration of adenosylhomocysteine. The sequence is that of Adenosylhomocysteinase from Archaeoglobus fulgidus (strain ATCC 49558 / DSM 4304 / JCM 9628 / NBRC 100126 / VC-16).